A 429-amino-acid chain; its full sequence is Glutamate-1-semialdehyde 2,1-aminomutase 2 (429 aa).

At K268 the chain carries N6-(pyridoxal phosphate)lysine.

This sequence belongs to the class-III pyridoxal-phosphate-dependent aminotransferase family. HemL subfamily. In terms of assembly, homodimer. Pyridoxal 5'-phosphate serves as cofactor.

It localises to the cytoplasm. The catalysed reaction is (S)-4-amino-5-oxopentanoate = 5-aminolevulinate. It functions in the pathway porphyrin-containing compound metabolism; protoporphyrin-IX biosynthesis; 5-aminolevulinate from L-glutamyl-tRNA(Glu): step 2/2. This chain is Glutamate-1-semialdehyde 2,1-aminomutase 2, found in Staphylococcus aureus (strain MSSA476).